Consider the following 191-residue polypeptide: MSRIGKLPIAIPPKVEVTLDGRRVVVKGPKGTLDLTLPDSVEVVREDGRLLVTRRGESRRAREQHGLGRTLVANMVTGVTTGFTKPMQIAGVGYRVALTGRKLTINAGFSHPIEIELPAGIDIEVDPKASAIAGTRNQQGFNFVIKGFDKQAVGDLAAKIRDIRPPEPYKGKGIRYTAEKILLKAGKSGKK.

It belongs to the universal ribosomal protein uL6 family. Part of the 50S ribosomal subunit.

Functionally, this protein binds to the 23S rRNA, and is important in its secondary structure. It is located near the subunit interface in the base of the L7/L12 stalk, and near the tRNA binding site of the peptidyltransferase center. This Gloeobacter violaceus (strain ATCC 29082 / PCC 7421) protein is Large ribosomal subunit protein uL6.